We begin with the raw amino-acid sequence, 343 residues long: Palmitoyltransferase ZDHHC4 (343 aa).

Residues 1–2 lie on the Lumenal side of the membrane; that stretch reads MD. The chain crosses the membrane as a helical span at residues 3-23; it reads FLVLFLFYLAFLLICVVLICI. The Cytoplasmic segment spans residues 24–67; sequence FTKSQRLKAVVLGGAQVCSRVIPQCLQRAVQTLLHQLFHTRHPT. The chain crosses the membrane as a helical span at residues 68–88; sequence FIVLHLLLQGLVYAEYTCEVF. The Lumenal portion of the chain corresponds to 89–100; it reads GYCRELEFSLPY. The helical transmembrane segment at 101–121 threads the bilayer; that stretch reads LLLPYVLLSVNLVFFTLTCAA. Over 122 to 193 the chain is Cytoplasmic; sequence NPGTITKANE…NCIGAWNTRY (72 aa). In terms of domain architecture, DHHC spans 149–199; it reads SRCPTCDLRKPARSKHCRLCDRCVHRFDHHCVWVNNCIGAWNTRYFLIYLL. Residue cysteine 179 is the S-palmitoyl cysteine intermediate of the active site. The helical transmembrane segment at 194 to 214 threads the bilayer; sequence FLIYLLTLTASAATIATVTAA. The Lumenal segment spans residues 215–255; the sequence is FLLRLVTVSDLYQETYLDDVGHFQAVDTVFLIQHLFLAFPR. A helical transmembrane segment spans residues 256 to 276; the sequence is IVFLLGFVIVLSMLLAGYLCF. Residues 277-343 lie on the Cytoplasmic side of the membrane; the sequence is ALYLAATNQT…ATPSYKKKEK (67 aa). Residues 340–343 carry the Di-lysine motif motif; it reads KKEK.

This sequence belongs to the DHHC palmitoyltransferase family. As to quaternary structure, interacts with CPT1A.

It localises to the endoplasmic reticulum membrane. It is found in the golgi apparatus membrane. The protein resides in the cell membrane. It carries out the reaction L-cysteinyl-[protein] + hexadecanoyl-CoA = S-hexadecanoyl-L-cysteinyl-[protein] + CoA. Functionally, palmitoyltransferase that could catalyze the addition of palmitate onto protein substrates including the D(2) dopamine receptor DRD2, GSK3B or MAVS. Mediates GSK3B palmitoylation to prevent its AKT1-mediated phosphorylation leading to activation of the STAT3 signaling pathway. Also catalyzes MAVS palmitoylation which promotes its stabilization and activation by inhibiting 'Lys-48'- but facilitating 'Lys-63'-linked ubiquitination. The protein is Palmitoyltransferase ZDHHC4 of Mus musculus (Mouse).